The primary structure comprises 675 residues: G-protein-signaling modulator 1 (675 aa).

A mediates association with membranes region spans residues 1 to 509 (MAGPAPPVAD…DLLTKFQSSR (509 aa)). 9 TPR repeats span residues 28–61 (CLEL…GTED), 66–99 (SAIY…ARTI), 106–139 (AKAS…AQEQ), 146–181 (ARAL…PPDV), 183–202 (ETLC…VKEL), 209–242 (GRAY…AKEF), 249–282 (RRAY…SRQL), 289–322 (AQAC…AQEL), and 329–362 (GRAC…SQEI). Positions 364–487 (DRHGELTARM…VRVHVPRTSI (124 aa)) are interaction with STK11/LKB1. Positions 391-412 (SEKPDLAGYEAQGARPKRTQRL) are disordered. Ser413 bears the Phosphoserine mark. Arg421 bears the Omega-N-methylarginine mark. The segment covering 424 to 442 (LEREQNGDSHHSGDWRGPS) has biased composition (basic and acidic residues). The segment at 424–492 (LEREQNGDSH…PRTSIPRAPS (69 aa)) is disordered. Phosphoserine is present on residues Ser445, Ser469, Ser471, Ser492, and Ser493. A compositionally biased stretch (basic and acidic residues) spans 454-469 (KYQEGPDAERRPREGS). One can recognise a GoLoco 1 domain in the interval 495–517 (EECFFDLLTKFQSSRMDDQRCPL). A phosphoserine mark is found at Ser545 and Ser569. GoLoco domains are found at residues 548–570 (TEEF…RASV), 596–618 (GDDF…RCPP), and 630–652 (DEDF…RVDL). 2 disordered regions span residues 610 to 630 (RIDD…TMPD) and 644 to 675 (RMDE…PGAS).

This sequence belongs to the GPSM family. In terms of assembly, interacts with GNAI1, GNAI2 and GNAI3 preferentially in their GDP-bound state. May also interact with GNAO1. Interacts with STK11/LKB1 and MACF1. Interacts with INSC/inscuteable and FRMPD1. Phosphorylation regulates interaction with G(i/o) alpha. Expressed in intestinal cells.

It localises to the cytoplasm. Its subcellular location is the cytosol. It is found in the endoplasmic reticulum membrane. The protein localises to the golgi apparatus membrane. The protein resides in the cell membrane. Its function is as follows. Guanine nucleotide dissociation inhibitor (GDI) which functions as a receptor-independent activator of heterotrimeric G-protein signaling. Keeps G(i/o) alpha subunit in its GDP-bound form thus uncoupling heterotrimeric G-proteins signaling from G protein-coupled receptors. Controls spindle orientation and asymmetric cell fate of cerebral cortical progenitors. May also be involved in macroautophagy in intestinal cells. May play a role in drug addiction. In Homo sapiens (Human), this protein is G-protein-signaling modulator 1 (GPSM1).